A 333-amino-acid chain; its full sequence is Glycerol-3-phosphate dehydrogenase [NAD(P)+] (333 aa).

Trp-11, Arg-30, and Lys-105 together coordinate NADPH. 3 residues coordinate sn-glycerol 3-phosphate: Lys-105, Gly-133, and Ser-135. Ala-137 lines the NADPH pocket. Positions 188, 241, 251, 252, and 253 each coordinate sn-glycerol 3-phosphate. Lys-188 (proton acceptor) is an active-site residue. Residue Arg-252 coordinates NADPH. Residues Val-276 and Glu-278 each coordinate NADPH.

Belongs to the NAD-dependent glycerol-3-phosphate dehydrogenase family.

Its subcellular location is the cytoplasm. The enzyme catalyses sn-glycerol 3-phosphate + NAD(+) = dihydroxyacetone phosphate + NADH + H(+). It catalyses the reaction sn-glycerol 3-phosphate + NADP(+) = dihydroxyacetone phosphate + NADPH + H(+). It functions in the pathway membrane lipid metabolism; glycerophospholipid metabolism. Catalyzes the reduction of the glycolytic intermediate dihydroxyacetone phosphate (DHAP) to sn-glycerol 3-phosphate (G3P), the key precursor for phospholipid synthesis. This is Glycerol-3-phosphate dehydrogenase [NAD(P)+] from Methylibium petroleiphilum (strain ATCC BAA-1232 / LMG 22953 / PM1).